A 600-amino-acid polypeptide reads, in one-letter code: Methylenetetrahydrofolate reductase 2 (600 aa).

E22 serves as the catalytic Proton donor/acceptor. Residues 22–27 and 54–55 contribute to the NAD(+) site; these read EYFVPK and TW. Residues 54 to 55, H84, 114 to 116, 133 to 134, Y156, D171, and K178 each bind FAD; these read TW, RGD, and YA. Residue D116 coordinates substrate. Substrate is bound by residues Q189 and Y282.

It belongs to the methylenetetrahydrofolate reductase family. The cofactor is FAD.

The enzyme catalyses (6S)-5-methyl-5,6,7,8-tetrahydrofolate + NADP(+) = (6R)-5,10-methylene-5,6,7,8-tetrahydrofolate + NADPH + H(+). It participates in one-carbon metabolism; tetrahydrofolate interconversion. The chain is Methylenetetrahydrofolate reductase 2 (MET13) from Saccharomyces cerevisiae (strain ATCC 204508 / S288c) (Baker's yeast).